Consider the following 564-residue polypeptide: Glutamate--tRNA ligase (564 aa).

A 'HIGH' region motif is present at residues 107–117 (PNPNGPPTLGS).

This sequence belongs to the class-I aminoacyl-tRNA synthetase family. Glutamate--tRNA ligase type 2 subfamily.

It is found in the cytoplasm. It carries out the reaction tRNA(Glu) + L-glutamate + ATP = L-glutamyl-tRNA(Glu) + AMP + diphosphate. Its function is as follows. Catalyzes the attachment of glutamate to tRNA(Glu) in a two-step reaction: glutamate is first activated by ATP to form Glu-AMP and then transferred to the acceptor end of tRNA(Glu). This is Glutamate--tRNA ligase from Methanothrix thermoacetophila (strain DSM 6194 / JCM 14653 / NBRC 101360 / PT) (Methanosaeta thermophila).